A 401-amino-acid chain; its full sequence is Chalcone synthase 3 (401 aa).

Cysteine 168 is a catalytic residue.

This sequence belongs to the thiolase-like superfamily. Chalcone/stilbene synthases family.

It carries out the reaction (E)-4-coumaroyl-CoA + 3 malonyl-CoA + 3 H(+) = 2',4,4',6'-tetrahydroxychalcone + 3 CO2 + 4 CoA. The protein operates within secondary metabolite biosynthesis; flavonoid biosynthesis. Functionally, the primary product of this enzyme is 4,2',4',6'-tetrahydroxychalcone (also termed naringenin-chalcone or chalcone) which can under specific conditions spontaneously isomerize into naringenin. In Sorghum bicolor (Sorghum), this protein is Chalcone synthase 3 (CHS3).